The following is a 150-amino-acid chain: Protein SLM6 (150 aa).

The Extracellular portion of the chain corresponds to M1–S76. A helical membrane pass occupies residues W77–F97. Over S98 to S104 the chain is Cytoplasmic. Residues L105–A125 form a helical membrane-spanning segment. The Extracellular portion of the chain corresponds to A126–L150.

Its subcellular location is the membrane. The polypeptide is Protein SLM6 (Saccharomyces cerevisiae (strain ATCC 204508 / S288c) (Baker's yeast)).